The sequence spans 280 residues: Diaminopimelate epimerase (280 aa).

Substrate is bound by residues Asn15 and Asn66. The Proton donor role is filled by Cys75. Substrate contacts are provided by residues 76–77 (GN), Asn163, Asn196, and 214–215 (ER). Cys223 functions as the Proton acceptor in the catalytic mechanism. 224-225 (GT) contacts substrate.

Belongs to the diaminopimelate epimerase family. As to quaternary structure, homodimer.

It is found in the cytoplasm. It carries out the reaction (2S,6S)-2,6-diaminopimelate = meso-2,6-diaminopimelate. It functions in the pathway amino-acid biosynthesis; L-lysine biosynthesis via DAP pathway; DL-2,6-diaminopimelate from LL-2,6-diaminopimelate: step 1/1. In terms of biological role, catalyzes the stereoinversion of LL-2,6-diaminopimelate (L,L-DAP) to meso-diaminopimelate (meso-DAP), a precursor of L-lysine and an essential component of the bacterial peptidoglycan. This is Diaminopimelate epimerase from Phocaeicola vulgatus (strain ATCC 8482 / DSM 1447 / JCM 5826 / CCUG 4940 / NBRC 14291 / NCTC 11154) (Bacteroides vulgatus).